Here is a 212-residue protein sequence, read N- to C-terminus: Uridine kinase (212 aa).

13 to 20 (GASASGKS) contributes to the ATP binding site.

Belongs to the uridine kinase family.

Its subcellular location is the cytoplasm. It carries out the reaction uridine + ATP = UMP + ADP + H(+). The catalysed reaction is cytidine + ATP = CMP + ADP + H(+). It functions in the pathway pyrimidine metabolism; CTP biosynthesis via salvage pathway; CTP from cytidine: step 1/3. It participates in pyrimidine metabolism; UMP biosynthesis via salvage pathway; UMP from uridine: step 1/1. This chain is Uridine kinase, found in Shewanella halifaxensis (strain HAW-EB4).